The chain runs to 256 residues: UPF0246 protein SPO0106 (256 aa).

It belongs to the UPF0246 family.

The polypeptide is UPF0246 protein SPO0106 (Ruegeria pomeroyi (strain ATCC 700808 / DSM 15171 / DSS-3) (Silicibacter pomeroyi)).